The following is a 2439-amino-acid chain: Centrosomal protein of 290 kDa (2439 aa).

2 coiled-coil regions span residues 75-913 (AEQA…VVTE) and 1271-1576 (NTML…YMDT). Disordered regions lie at residues 1802–1824 (ETLNKDLQRSQKSQNKLQSEKEA), 1867–1890 (ELDRKSISEPADKRSTLKEDKSSK), and 2017–2048 (ESRLSKEPPSRPSTSGRGSDTPSQREHEFQKE). Basic and acidic residues predominate over residues 2039-2048 (SQREHEFQKE). Positions 2046 to 2394 (QKENLRLSTE…KLTQELKHFD (349 aa)) form a coiled coil.

In terms of assembly, part of the tectonic-like complex (also named B9 complex).

Its subcellular location is the cytoplasm. It is found in the cytoskeleton. The protein localises to the microtubule organizing center. It localises to the centrosome. The protein resides in the centriolar satellite. Its subcellular location is the nucleus. It is found in the cilium basal body. Functionally, involved in early and late steps in cilia formation. May play a role in early ciliogenesis in the disappearance of centriolar satellites and in the transition of primary ciliar vesicles (PCVs) to capped ciliary vesicles (CCVs). In the ciliary transition zone is part of the tectonic-like complex which is required for tissue-specific ciliogenesis and may regulate ciliary membrane composition. Involved in regulation of the BBSome complex integrity and in ciliary targeting of selected BBSome cargos. Required for the correct localization of ciliary and phototransduction proteins in retinal photoreceptor cells; may play a role in ciliary transport processes. Involved in development of the nervous system and kidney. This chain is Centrosomal protein of 290 kDa (cep290), found in Danio rerio (Zebrafish).